The sequence spans 217 residues: Large ribosomal subunit protein uL3 (217 aa).

The protein belongs to the universal ribosomal protein uL3 family. Part of the 50S ribosomal subunit. Forms a cluster with proteins L14 and L19.

Functionally, one of the primary rRNA binding proteins, it binds directly near the 3'-end of the 23S rRNA, where it nucleates assembly of the 50S subunit. The chain is Large ribosomal subunit protein uL3 from Mycobacterium marinum (strain ATCC BAA-535 / M).